We begin with the raw amino-acid sequence, 398 residues long: Phosphoglycerate kinase (398 aa).

Substrate-binding positions include 21–23, Arg-36, 59–62, Arg-119, and Arg-157; these read DFN and HLGR. ATP-binding positions include Lys-208, Gly-296, Glu-327, and 354-357; that span reads GGDS.

The protein belongs to the phosphoglycerate kinase family. As to quaternary structure, monomer.

Its subcellular location is the cytoplasm. The enzyme catalyses (2R)-3-phosphoglycerate + ATP = (2R)-3-phospho-glyceroyl phosphate + ADP. It participates in carbohydrate degradation; glycolysis; pyruvate from D-glyceraldehyde 3-phosphate: step 2/5. In Streptococcus equi subsp. zooepidemicus (strain H70), this protein is Phosphoglycerate kinase.